A 334-amino-acid chain; its full sequence is Transposase for insertion sequence element IS1328 (334 aa).

It belongs to the transposase IS1111A/IS1328/IS1533 family.

Required for the transposition of the insertion element. This chain is Transposase for insertion sequence element IS1328, found in Yersinia enterocolitica.